A 151-amino-acid chain; its full sequence is Small ribosomal subunit protein uS15 (151 aa).

The segment covering 1–16 (MPHRSRDKKGRSRSVR) has biased composition (basic residues). The interval 1 to 20 (MPHRSRDKKGRSRSVRPAHP) is disordered.

It belongs to the universal ribosomal protein uS15 family. In terms of assembly, part of the 30S ribosomal subunit.

This chain is Small ribosomal subunit protein uS15, found in Pyrobaculum aerophilum (strain ATCC 51768 / DSM 7523 / JCM 9630 / CIP 104966 / NBRC 100827 / IM2).